Here is a 525-residue protein sequence, read N- to C-terminus: MGPPAMAFQALTLTPLPFSLHSSSRRVRVLAVAADQTPPPAPPSEPANSPSRLLRELAQRKKAVSPKKKHPPRRFILKPPLDDERLTRRFLSSPQLSLKALPLLSSCLPSAPLSTADRTWMDEYLLEAKQALGYPLAPSETLGEGDDCPARHFDVLFYLAFQHLDPSSERTRMRHVRNGHSRLWFLGQYVLELAFCEFFLQRYPRESPGPMRERVFALIGKKVLPRWLKAASLHNLVFPYDDLDKMIRKDREPPSKAVFWAIFGAIYLCFGMPEVYRVLFEAFGMDPDDESCQPKLRRQLEDVDYVSVEFEKRQLTWQDVAAYRPPPDALFAHPRLFRACVPPGMHRFRGNIWDFDSRPKVMTTLGYPLPMNDRIPEITEARNIELGLGLQLCFLHPSKHKFEHPRFCYERLEYVGQKIQDLVMAERLLMKHLDAPGRWLAEKHRRTLMNKYCGRYLRDKHLQHYIIYGETVQDRFEHNRRLRNPSTTSVQQALHGLAYCVYGKPDVRRLMFEVFDFEQVQPKAV.

A chloroplast-targeting transit peptide spans 1-28 (MGPPAMAFQALTLTPLPFSLHSSSRRVR). RNase III domains follow at residues 125–271 (LLEA…LCFG) and 403–503 (EHPR…CVYG).

In terms of assembly, interacts with RNA. Part of large ribonucleo-protein particles that contain CAF1 and/or CAF2.

It localises to the plastid. The protein localises to the chloroplast stroma. Its function is as follows. Binds specific group II introns in chloroplasts and facilitates their splicing. Acts on both subgroup IIA and subgroup IIB introns. The substrates of the subgroup II also require the CRM domain proteins CAF1 or CAF2. Binds both single-stranded and double-stranded RNA non-specifically, but lacks endonuclease activity. Required for plastid ribosome biogenesis. This Zea mays (Maize) protein is Ribonuclease III domain-containing protein RNC1, chloroplastic.